The primary structure comprises 109 residues: Parvalbumin alpha (109 aa).

EF-hand domains are found at residues 38-73 (KTDA…FSAH) and 77-109 (LNDT…VAQA). The Ca(2+) site is built by Asp51, Asp53, Ser55, Glu62, Asp90, Asp92, Asp94, Lys96, and Glu101.

It belongs to the parvalbumin family.

Functionally, in muscle, parvalbumin is thought to be involved in relaxation after contraction. It binds two calcium ions. The chain is Parvalbumin alpha from Triakis semifasciata (Leopard shark).